A 322-amino-acid chain; its full sequence is D-alanine--D-alanine ligase (322 aa).

Positions 110–310 constitute an ATP-grasp domain; that stretch reads KAVLAAAGIP…FDRLVFWIVE (201 aa). 137–191 is an ATP binding site; the sequence is MPPPYVVKPNAEGSSVGVSLVFEGANGPPRQLAAPDWAFGEQVMVEPYIPGLELA. Residues D263, E277, and N279 each contribute to the Mg(2+) site.

Belongs to the D-alanine--D-alanine ligase family. Mg(2+) is required as a cofactor. Mn(2+) serves as cofactor.

It is found in the cytoplasm. It catalyses the reaction 2 D-alanine + ATP = D-alanyl-D-alanine + ADP + phosphate + H(+). It participates in cell wall biogenesis; peptidoglycan biosynthesis. Its function is as follows. Cell wall formation. The sequence is that of D-alanine--D-alanine ligase from Caulobacter sp. (strain K31).